Here is a 170-residue protein sequence, read N- to C-terminus: J domain-containing protein (170 aa).

Positions 17 to 82 (DYYALLGCDE…SKRALYDKWR (66 aa)) constitute a J domain. The segment at 101 to 170 (QQSMHWSKPN…VISKFRNYEI (70 aa)) is disordered. The segment covering 110–120 (NTKDRMLEGEP) has biased composition (basic and acidic residues). Low complexity-rich tracts occupy residues 121–135 (GKPS…SNPG) and 142–153 (GGAALWGRWGAG).

The sequence is that of J domain-containing protein (jdp) from Manduca sexta (Tobacco hawkmoth).